Here is a 208-residue protein sequence, read N- to C-terminus: Imidazoleglycerol-phosphate dehydratase (208 aa).

This sequence belongs to the imidazoleglycerol-phosphate dehydratase family.

The protein resides in the cytoplasm. It carries out the reaction D-erythro-1-(imidazol-4-yl)glycerol 3-phosphate = 3-(imidazol-4-yl)-2-oxopropyl phosphate + H2O. Its pathway is amino-acid biosynthesis; L-histidine biosynthesis; L-histidine from 5-phospho-alpha-D-ribose 1-diphosphate: step 6/9. This chain is Imidazoleglycerol-phosphate dehydratase, found in Hyphomonas neptunium (strain ATCC 15444).